The chain runs to 93 residues: Small ribosomal subunit protein bS20c (93 aa).

Belongs to the bacterial ribosomal protein bS20 family.

Its subcellular location is the plastid. The protein resides in the chloroplast. Its function is as follows. Binds directly to 16S ribosomal RNA. The sequence is that of Small ribosomal subunit protein bS20c from Trieres chinensis (Marine centric diatom).